The chain runs to 482 residues: Anaerobic nitric oxide reductase flavorubredoxin (482 aa).

A zinc metallo-hydrolase region spans residues 30 to 210 (LRGSSYNSYL…PFSRLVTPKI (181 aa)). Positions 79, 81, 83, 147, 166, and 227 each coordinate Fe cation. One can recognise a Flavodoxin-like domain in the interval 254 to 393 (ITIFYDTMSN…LCRQHGRDIA (140 aa)). Residues 260–264 (TMSNN) and 342–369 (AFGSHGWSGGAVDRLSTRLQDAGFEMSL) contribute to the FMN site. The 52-residue stretch at 426 to 477 (GPMMQCSVCQWVYDPAKGEPNQDVQPGTPWSEVPDNFLCPECSLGKDVFDVL) folds into the Rubredoxin-like domain. Cysteine 431, cysteine 434, cysteine 464, and cysteine 467 together coordinate Fe cation.

In the N-terminal section; belongs to the zinc metallo-hydrolase group 3 family. In terms of assembly, homotetramer. The cofactor is Fe cation. FMN is required as a cofactor.

It localises to the cytoplasm. Its pathway is nitrogen metabolism; nitric oxide reduction. Its function is as follows. Anaerobic nitric oxide reductase; uses NADH to detoxify nitric oxide (NO), protecting several 4Fe-4S NO-sensitive enzymes. Has at least 2 reductase partners, only one of which (NorW, flavorubredoxin reductase) has been identified. NO probably binds to the di-iron center; electrons enter from the NorW at rubredoxin and are transferred sequentially to the FMN center and the di-iron center. Also able to function as an aerobic oxygen reductase. This Klebsiella pneumoniae subsp. pneumoniae (strain ATCC 700721 / MGH 78578) protein is Anaerobic nitric oxide reductase flavorubredoxin.